The primary structure comprises 141 residues: Nucleoside diphosphate kinase (141 aa).

ATP is bound by residues Lys-11, Phe-59, Arg-87, Thr-93, Arg-104, and Asn-114. Catalysis depends on His-117, which acts as the Pros-phosphohistidine intermediate.

This sequence belongs to the NDK family. Homotetramer. Requires Mg(2+) as cofactor.

It is found in the cytoplasm. The enzyme catalyses a 2'-deoxyribonucleoside 5'-diphosphate + ATP = a 2'-deoxyribonucleoside 5'-triphosphate + ADP. It carries out the reaction a ribonucleoside 5'-diphosphate + ATP = a ribonucleoside 5'-triphosphate + ADP. Its function is as follows. Major role in the synthesis of nucleoside triphosphates other than ATP. The ATP gamma phosphate is transferred to the NDP beta phosphate via a ping-pong mechanism, using a phosphorylated active-site intermediate. This chain is Nucleoside diphosphate kinase, found in Acidithiobacillus ferrooxidans (strain ATCC 53993 / BNL-5-31) (Leptospirillum ferrooxidans (ATCC 53993)).